Here is a 561-residue protein sequence, read N- to C-terminus: Arginine--tRNA ligase (561 aa).

A 'HIGH' region motif is present at residues 123–133 (PNIAKDMHVGH).

The protein belongs to the class-I aminoacyl-tRNA synthetase family. In terms of assembly, monomer.

It localises to the cytoplasm. The catalysed reaction is tRNA(Arg) + L-arginine + ATP = L-arginyl-tRNA(Arg) + AMP + diphosphate. In Chlamydia pneumoniae (Chlamydophila pneumoniae), this protein is Arginine--tRNA ligase (argS).